Here is a 465-residue protein sequence, read N- to C-terminus: Cysteine--tRNA ligase (465 aa).

Cys-27 provides a ligand contact to Zn(2+). Residues 29 to 39 (PTVYDDAHLGH) carry the 'HIGH' region motif. Cys-207, His-237, and Glu-241 together coordinate Zn(2+). The 'KMSKS' region motif lies at 269–273 (KMSKS). Lys-272 contributes to the ATP binding site.

It belongs to the class-I aminoacyl-tRNA synthetase family. In terms of assembly, monomer. It depends on Zn(2+) as a cofactor.

It is found in the cytoplasm. It carries out the reaction tRNA(Cys) + L-cysteine + ATP = L-cysteinyl-tRNA(Cys) + AMP + diphosphate. The protein is Cysteine--tRNA ligase (cysS) of Helicobacter pylori (strain ATCC 700392 / 26695) (Campylobacter pylori).